The chain runs to 99 residues: C-C motif chemokine 8 (99 aa).

The N-terminal stretch at 1 to 23 is a signal peptide; sequence MKVSAGILCLLLVAATFGTQVLA. Glutamine 24 is subject to Pyrrolidone carboxylic acid. Disulfide bonds link cysteine 34-cysteine 59 and cysteine 35-cysteine 75.

The protein belongs to the intercrine beta (chemokine CC) family. In terms of assembly, monomer or homodimer; in equilibrium.

The protein resides in the secreted. Chemotactic factor that attracts monocytes. This protein can bind heparin. In Bos taurus (Bovine), this protein is C-C motif chemokine 8 (CCL8).